We begin with the raw amino-acid sequence, 285 residues long: Inositol oxygenase (285 aa).

Arg-29 contributes to the substrate binding site. At Ser-33 the chain carries Phosphoserine. 85–88 (DESD) serves as a coordination point for substrate. Fe cation-binding residues include His-98, His-123, and Asp-124. Substrate contacts are provided by residues Lys-127 and 141–142 (GD). Fe cation is bound by residues His-194, His-220, and Asp-253. Residue 220–221 (HS) coordinates substrate.

Belongs to the myo-inositol oxygenase family. Fe cation serves as cofactor. In terms of tissue distribution, kidney specific. Renal proximal tubules.

It is found in the cytoplasm. It catalyses the reaction myo-inositol + O2 = D-glucuronate + H2O + H(+). It participates in polyol metabolism; myo-inositol degradation into D-glucuronate; D-glucuronate from myo-inositol: step 1/1. The chain is Inositol oxygenase (Miox) from Mus musculus (Mouse).